A 1596-amino-acid polypeptide reads, in one-letter code: Cellulose synthase 2 (1596 aa).

Positions 1–749 are catalytic; that stretch reads MIYRAILKRL…RSARHGATAS (749 aa). 2 helical membrane passes run 25 to 45 and 106 to 126; these read SPFVMMAVGVFLMLMAGGVTI and LSLLLVAAELYALLTLCLSYF. The interval 145–238 is catalytic subdomain A; it reads DWPVVDVYVP…YVVIFDCDHI (94 aa). The active site involves D187. Positions 234 and 236 each coordinate substrate. Residues 315–375 form a catalytic subdomain B region; it reads SAVLGIGGFA…GQRVRWARGM (61 aa). Residue D331 is part of the active site. 4 consecutive transmembrane segments (helical) span residues 396–416, 421–441, 505–525, and 544–564; these read LCYLSAMSHFLFAIPRLVFLA, FLFLGQNIIAASPFAILVYAF, FDLNAVYPNVILAVILALALV, and FALNTLWVAVSLIIVLASIAV. Positions 570 to 669 constitute a PilZ domain; the sequence is QIRHKPRVRA…ERQIVEFMFG (100 aa). Residues 750–1596 form a cyclic di-GMP binding domain region; the sequence is LIVLLGLPAA…RVKDTTDASH (847 aa). 2 disordered regions span residues 769-812 and 828-868; these read SRAT…IAPA and TGPA…APPI. Residues 783–809 are compositionally biased toward pro residues; that stretch reads VEPPPVNAPPPPSLPQPPGTLPTPPQI. A helical transmembrane segment spans residues 1553-1573; the sequence is LTLYVLGLVGAGLVAAAAVRL.

In the N-terminal section; belongs to the glycosyltransferase 2 family. It in the C-terminal section; belongs to the AcsB/BcsB family.

Its subcellular location is the cell inner membrane. The catalysed reaction is [(1-&gt;4)-beta-D-glucosyl](n) + UDP-alpha-D-glucose = [(1-&gt;4)-beta-D-glucosyl](n+1) + UDP + H(+). In Novacetimonas hansenii (Komagataeibacter hansenii), this protein is Cellulose synthase 2 (acsAII).